Here is a 396-residue protein sequence, read N- to C-terminus: Pre-mRNA-splicing regulator WTAP (396 aa).

An N-acetylmethionine modification is found at Met-1. Position 14 is a phosphoserine (Ser-14). Low complexity-rich tracts occupy residues 240 to 257 (QQQQ…TTAS), 278 to 291 (SNGS…SGSG), and 304 to 316 (PSSP…SSNS). Residues 240 to 396 (QQQQSQASAP…SSVNVQGSVL (157 aa)) form a disordered region. Phosphoserine is present on residues Ser-305, Ser-306, and Ser-341. The segment covering 340 to 356 (DSPTGSENSLTHQSNDT) has biased composition (polar residues). Thr-350 is subject to Phosphothreonine. Residues 357–368 (DSSHDPQEEKAV) show a composition bias toward basic and acidic residues. The span at 380 to 396 (HVQNGLDSSVNVQGSVL) shows a compositional bias: polar residues. A Phosphoserine modification is found at Ser-388.

Belongs to the fl(2)d family. Component of the WMM complex, a N6-methyltransferase complex composed of a catalytic subcomplex, named MAC, and of an associated subcomplex, named MACOM. The MAC subcomplex is composed of METTL3 and METTL14. The MACOM subcomplex is composed of WTAP, ZC3H13, CBLL1/HAKAI, VIRMA, and, in some cases of RBM15 (RBM15 or RBM15B). Interacts with WT1. Also a component of a MACOM-like complex, named WTAP complex, composed of WTAP, ZC3H13, CBLL1, VIRMA, RBM15, BCLAF1 and THRAP3. As to expression, ubiquitously expressed.

The protein resides in the nucleus speckle. Its subcellular location is the nucleus. The protein localises to the nucleoplasm. It is found in the cytoplasm. Functionally, associated component of the WMM complex, a complex that mediates N6-methyladenosine (m6A) methylation of RNAs, a modification that plays a role in the efficiency of mRNA splicing and RNA processing. Required for accumulation of METTL3 and METTL14 to nuclear speckle. Acts as a mRNA splicing regulator. Regulates G2/M cell-cycle transition by binding to the 3' UTR of CCNA2, which enhances its stability. Impairs WT1 DNA-binding ability and inhibits expression of WT1 target genes. This is Pre-mRNA-splicing regulator WTAP from Homo sapiens (Human).